Reading from the N-terminus, the 132-residue chain is Small ribosomal subunit protein uS11 (132 aa).

This sequence belongs to the universal ribosomal protein uS11 family. As to quaternary structure, part of the 30S ribosomal subunit. Interacts with proteins S7 and S18. Binds to IF-3.

Functionally, located on the platform of the 30S subunit, it bridges several disparate RNA helices of the 16S rRNA. Forms part of the Shine-Dalgarno cleft in the 70S ribosome. The chain is Small ribosomal subunit protein uS11 from Chlamydia muridarum (strain MoPn / Nigg).